We begin with the raw amino-acid sequence, 310 residues long: ATP-dependent protease (310 aa).

One can recognise an Integrase catalytic domain in the interval 24–186 (RLNQCFFKFK…TPNQKEENYF (163 aa)).

This Lactococcus lactis subsp. lactis (Streptococcus lactis) protein is ATP-dependent protease.